The following is a 629-amino-acid chain: Neuronal acetylcholine receptor subunit alpha-4 (629 aa).

The first 30 residues, 1–30 (MEIGGSGAPPPLLLLPLLLLLGTGLLPASS), serve as a signal peptide directing secretion. The Extracellular segment spans residues 32–249 (IETRAHAEER…IIRRLPLFYT (218 aa)). N59 carries an N-linked (GlcNAc...) asparagine glycan. Ca(2+)-binding residues include V78 and E80. N-linked (GlcNAc...) asparagine glycosylation is found at N109 and N176. 2 cysteine pairs are disulfide-bonded: C163–C177 and C227–C228. A helical membrane pass occupies residues 250–270 (INLIIPCLLISCLTVLVFYLP). C273 carries S-palmitoyl cysteine lipidation. A run of 2 helical transmembrane segments spans residues 279-299 (LCIS…EIIP) and 312-332 (LLFT…VLNV). The Cytoplasmic segment spans residues 333 to 603 (HHRSPRTHTM…KYVAMVIDRI (271 aa)). 2 disordered regions span residues 420-459 (ETQP…NSSG) and 503-529 (SLTE…SDQT). Position 427 is a phosphoserine (S427). The segment covering 431-442 (KVPDLKTSEVEK) has biased composition (basic and acidic residues). Residues 449 to 459 (PGSCHPPNSSG) are compositionally biased toward low complexity. The segment covering 504–529 (LTESKPTGSPASLKTRPSQLPVSDQT) has biased composition (polar residues). Phosphoserine occurs at positions 540 and 543. The helical transmembrane segment at 604-624 (FLWMFIIVCLLGTVGLFLPPW) threads the bilayer.

This sequence belongs to the ligand-gated ion channel (TC 1.A.9) family. Acetylcholine receptor (TC 1.A.9.1) subfamily. Alpha-4/CHRNA4 sub-subfamily. In terms of assembly, neuronal AChR is composed of two different types of subunits: alpha and beta. CHRNA4 forms heteropentameric neuronal acetylcholine receptors with CHRNB2 and CHRNB4, as well as CHRNA5 and CHRNB3 as accesory subunits. Found in two major stoichiometric forms, LS (low agonist sensitivity): (CHRNA4)3:(CHRNB2)2 and HS (high agonist sensitivity): (CHRNA4)2:(CHRNB2)3, the two stoichiometric forms differ in their unitary conductance, calcium permeability, ACh sensitivity and potentiation by divalent cation. Cells produce predominantly an (CHRNA4)3:(CHRNB2)2 nAChR. The (CHRNA4)2:(CHRNB2)3 expression is selectively up-regulated by nicotine and has lower single channel conductance and calcium permeability. In the striatum, also forms CHRNA4:CHRNA6:CHRNB2 complexes. Also found in the stoichiometric form: (CHRNA4:CHRNB2)2:CHRNB3. Interacts with RIC3; which is required for proper folding and assembly. Interacts with LYPD6.

The protein resides in the synaptic cell membrane. It localises to the cell membrane. The catalysed reaction is K(+)(in) = K(+)(out). The enzyme catalyses Na(+)(in) = Na(+)(out). It carries out the reaction Ca(2+)(in) = Ca(2+)(out). Activated by a myriad of ligands such as acetylcholine, cytisine, nicotine, choline and epibatidine. Channel potentiation by calcium is stoichiometry-selective, CHRNA4:CHRNB2 nACh receptor is achieved by calcium association with topographically distinct sites framed by anionic residues within the CHRNA4 subunit and between the CHRNA4 and CHRNB2 subunits. nAChR activity is inhibited by the antagonist alpha-conotoxins BuIA, PnIA, GID and MII, small disulfide-constrained peptides from cone snails. Functionally, component of neuronal acetylcholine receptors (nAChRs) that function as pentameric, ligand-gated cation channels with high calcium permeability among other activities. nAChRs are excitatory neurotrasnmitter receptors formed by a collection of nAChR subunits known to mediate synaptic transmission in the nervous system and the neuromuscular junction. Each nAchR subunit confers differential attributes to channel properties, including activation, deactivation and desensitization kinetics, pH sensitivity, cation permeability, and binding to allosteric modulators. CHRNA4 forms heteropentameric neuronal acetylcholine receptors with CHRNB2 and CHRNB4, as well as CHRNA5 and CHRNB3 as accesory subunits. Is the most abundant nAChR subtype expressed in the central nervous system. Found in two major stoichiometric forms,(CHRNA4)3:(CHRNB2)2 and (CHRNA4)2:(CHRNB2)3, the two stoichiometric forms differ in their unitary conductance, calcium permeability, ACh sensitivity and potentiation by divalent cation. Involved in the modulation of calcium-dependent signaling pathways, influences the release of neurotransmitters, including dopamine, glutamate and GABA. The chain is Neuronal acetylcholine receptor subunit alpha-4 (Chrna4) from Mus musculus (Mouse).